The primary structure comprises 336 residues: 4-hydroxythreonine-4-phosphate dehydrogenase (336 aa).

The substrate site is built by His-142 and Thr-143. His-172, His-217, and His-274 together coordinate a divalent metal cation. The substrate site is built by Lys-282, Asn-291, and Arg-300.

The protein belongs to the PdxA family. As to quaternary structure, homodimer. The cofactor is Zn(2+). It depends on Mg(2+) as a cofactor. Requires Co(2+) as cofactor.

The protein resides in the cytoplasm. The enzyme catalyses 4-(phosphooxy)-L-threonine + NAD(+) = 3-amino-2-oxopropyl phosphate + CO2 + NADH. It functions in the pathway cofactor biosynthesis; pyridoxine 5'-phosphate biosynthesis; pyridoxine 5'-phosphate from D-erythrose 4-phosphate: step 4/5. Its function is as follows. Catalyzes the NAD(P)-dependent oxidation of 4-(phosphooxy)-L-threonine (HTP) into 2-amino-3-oxo-4-(phosphooxy)butyric acid which spontaneously decarboxylates to form 3-amino-2-oxopropyl phosphate (AHAP). The protein is 4-hydroxythreonine-4-phosphate dehydrogenase of Trichlorobacter lovleyi (strain ATCC BAA-1151 / DSM 17278 / SZ) (Geobacter lovleyi).